A 294-amino-acid chain; its full sequence is Lipoyl synthase (294 aa).

Positions 35, 40, 46, 61, 65, 68, and 275 each coordinate [4Fe-4S] cluster. The region spanning 46-264 is the Radical SAM core domain; sequence CWGGGTATVM…RDQGLALGFR (219 aa).

The protein belongs to the radical SAM superfamily. Lipoyl synthase family. [4Fe-4S] cluster is required as a cofactor.

It localises to the cytoplasm. The enzyme catalyses [[Fe-S] cluster scaffold protein carrying a second [4Fe-4S](2+) cluster] + N(6)-octanoyl-L-lysyl-[protein] + 2 oxidized [2Fe-2S]-[ferredoxin] + 2 S-adenosyl-L-methionine + 4 H(+) = [[Fe-S] cluster scaffold protein] + N(6)-[(R)-dihydrolipoyl]-L-lysyl-[protein] + 4 Fe(3+) + 2 hydrogen sulfide + 2 5'-deoxyadenosine + 2 L-methionine + 2 reduced [2Fe-2S]-[ferredoxin]. Its pathway is protein modification; protein lipoylation via endogenous pathway; protein N(6)-(lipoyl)lysine from octanoyl-[acyl-carrier-protein]: step 2/2. In terms of biological role, catalyzes the radical-mediated insertion of two sulfur atoms into the C-6 and C-8 positions of the octanoyl moiety bound to the lipoyl domains of lipoate-dependent enzymes, thereby converting the octanoylated domains into lipoylated derivatives. This Anaeromyxobacter dehalogenans (strain 2CP-C) protein is Lipoyl synthase.